Consider the following 205-residue polypeptide: Ribonuclease HII (205 aa).

In terms of domain architecture, RNase H type-2 spans 16-205; sequence VSEVGIDEVG…KSFLKKSNLF (190 aa). Aspartate 22, glutamate 23, and aspartate 118 together coordinate a divalent metal cation.

This sequence belongs to the RNase HII family. Mn(2+) is required as a cofactor. The cofactor is Mg(2+).

The protein resides in the cytoplasm. It catalyses the reaction Endonucleolytic cleavage to 5'-phosphomonoester.. In terms of biological role, endonuclease that specifically degrades the RNA of RNA-DNA hybrids. This is Ribonuclease HII from Prochlorococcus marinus (strain MIT 9215).